The primary structure comprises 328 residues: GMP reductase (328 aa).

The active-site Thioimidate intermediate is Cys176. 205 to 228 (IIADGGIRTHGDVAKSIRFGATMV) is an NADP(+) binding site.

The protein belongs to the IMPDH/GMPR family. GuaC type 2 subfamily.

It catalyses the reaction IMP + NH4(+) + NADP(+) = GMP + NADPH + 2 H(+). Catalyzes the irreversible NADPH-dependent deamination of GMP to IMP. It functions in the conversion of nucleobase, nucleoside and nucleotide derivatives of G to A nucleotides, and in maintaining the intracellular balance of A and G nucleotides. The polypeptide is GMP reductase (Bacillus cereus (strain ATCC 14579 / DSM 31 / CCUG 7414 / JCM 2152 / NBRC 15305 / NCIMB 9373 / NCTC 2599 / NRRL B-3711)).